We begin with the raw amino-acid sequence, 310 residues long: Ribosomal RNA small subunit methyltransferase H (310 aa).

S-adenosyl-L-methionine is bound by residues 33 to 35 (AGH), D53, F79, D100, and Q107.

Belongs to the methyltransferase superfamily. RsmH family.

It localises to the cytoplasm. It carries out the reaction cytidine(1402) in 16S rRNA + S-adenosyl-L-methionine = N(4)-methylcytidine(1402) in 16S rRNA + S-adenosyl-L-homocysteine + H(+). Functionally, specifically methylates the N4 position of cytidine in position 1402 (C1402) of 16S rRNA. The sequence is that of Ribosomal RNA small subunit methyltransferase H from Clostridium perfringens (strain 13 / Type A).